Consider the following 208-residue polypeptide: V-type proton ATPase subunit E (208 aa).

It belongs to the V-ATPase E subunit family.

In terms of biological role, produces ATP from ADP in the presence of a proton gradient across the membrane. In Chlamydia trachomatis serovar L2 (strain ATCC VR-902B / DSM 19102 / 434/Bu), this protein is V-type proton ATPase subunit E.